The following is a 154-amino-acid chain: uncharacterized protein (154 aa).

Residues H47, H127, and H131 each coordinate a divalent metal cation. Position 150 is a phosphotyrosine (Y150).

The protein belongs to the DinB family. Homodimer.

This is an uncharacterized protein from Bacillus subtilis (strain 168).